A 265-amino-acid chain; its full sequence is ATP synthase subunit a (265 aa).

6 helical membrane passes run 26 to 46 (VHLDTLFFSLVSGVLFLFFFY), 88 to 108 (IGSLALTIFCWVFIMNAIDLI), 132 to 152 (DISATLGMSVCVFALIIFYTI), 168 to 188 (PFNHWAFIPVNFLLEAVTLLA), 195 to 217 (FRLFGNMYAGELIFVLIAVMYMA), and 231 to 251 (LIWAIFHILVITLQAFIFMML).

This sequence belongs to the ATPase A chain family. In terms of assembly, F-type ATPases have 2 components, CF(1) - the catalytic core - and CF(0) - the membrane proton channel. CF(1) has five subunits: alpha(3), beta(3), gamma(1), delta(1), epsilon(1). CF(0) has three main subunits: a(1), b(2) and c(9-12). The alpha and beta chains form an alternating ring which encloses part of the gamma chain. CF(1) is attached to CF(0) by a central stalk formed by the gamma and epsilon chains, while a peripheral stalk is formed by the delta and b chains.

Its subcellular location is the cell inner membrane. In terms of biological role, key component of the proton channel; it plays a direct role in the translocation of protons across the membrane. In Histophilus somni (strain 2336) (Haemophilus somnus), this protein is ATP synthase subunit a.